The sequence spans 328 residues: Malate dehydrogenase (328 aa).

12 to 18 (GAAGQIG) is an NAD(+) binding site. Positions 95 and 101 each coordinate substrate. NAD(+) is bound by residues Asn-108, Gln-115, and 132 to 134 (VGN). Positions 134 and 165 each coordinate substrate. Residue His-190 is the Proton acceptor of the active site.

Belongs to the LDH/MDH superfamily. MDH type 2 family.

The enzyme catalyses (S)-malate + NAD(+) = oxaloacetate + NADH + H(+). Its function is as follows. Catalyzes the reversible oxidation of malate to oxaloacetate. The protein is Malate dehydrogenase of Polaromonas sp. (strain JS666 / ATCC BAA-500).